The following is a 122-amino-acid chain: Large ribosomal subunit protein bL19c (122 aa).

The protein belongs to the bacterial ribosomal protein bL19 family.

The protein localises to the plastid. The protein resides in the chloroplast. The sequence is that of Large ribosomal subunit protein bL19c from Gracilaria tenuistipitata var. liui (Red alga).